A 179-amino-acid polypeptide reads, in one-letter code: Large ribosomal subunit protein uL5 (179 aa).

Belongs to the universal ribosomal protein uL5 family. As to quaternary structure, part of the 50S ribosomal subunit; part of the 5S rRNA/L5/L18/L25 subcomplex. Contacts the 5S rRNA and the P site tRNA. Forms a bridge to the 30S subunit in the 70S ribosome.

This is one of the proteins that bind and probably mediate the attachment of the 5S RNA into the large ribosomal subunit, where it forms part of the central protuberance. In the 70S ribosome it contacts protein S13 of the 30S subunit (bridge B1b), connecting the 2 subunits; this bridge is implicated in subunit movement. Contacts the P site tRNA; the 5S rRNA and some of its associated proteins might help stabilize positioning of ribosome-bound tRNAs. The polypeptide is Large ribosomal subunit protein uL5 (Burkholderia mallei (strain NCTC 10247)).